Here is a 157-residue protein sequence, read N- to C-terminus: MSEDAPKILGPLDVRRVMAALPHRYPLLLVDRVEELVVDERITAIKAVTINENFFQGHFPGRPIMPGVLIVEAMAQAAGVLAVESLGLAGSGKLVYFMTIDEVKFRTPVEPGVLLRLEVAFAQKRGSVCKFEGKAYIGDKLAAQANFTAMIADPPTD.

Residue His-58 is part of the active site.

It belongs to the thioester dehydratase family. FabZ subfamily.

The protein localises to the cytoplasm. It catalyses the reaction a (3R)-hydroxyacyl-[ACP] = a (2E)-enoyl-[ACP] + H2O. In terms of biological role, involved in unsaturated fatty acids biosynthesis. Catalyzes the dehydration of short chain beta-hydroxyacyl-ACPs and long chain saturated and unsaturated beta-hydroxyacyl-ACPs. The chain is 3-hydroxyacyl-[acyl-carrier-protein] dehydratase FabZ from Rhizorhabdus wittichii (strain DSM 6014 / CCUG 31198 / JCM 15750 / NBRC 105917 / EY 4224 / RW1) (Sphingomonas wittichii).